Reading from the N-terminus, the 355-residue chain is S-methyl-5'-thioadenosine phosphorylase (355 aa).

Phosphate-binding positions include Thr-45, 91 to 92, and 124 to 125; these read RH and SA. Met-226 is a substrate binding site. Ser-227 contacts phosphate. 250–252 contributes to the substrate binding site; that stretch reads DYD.

This sequence belongs to the PNP/MTAP phosphorylase family. MTAP subfamily. In terms of assembly, homotrimer.

It localises to the cytoplasm. It is found in the nucleus. The catalysed reaction is S-methyl-5'-thioadenosine + phosphate = 5-(methylsulfanyl)-alpha-D-ribose 1-phosphate + adenine. It functions in the pathway amino-acid biosynthesis; L-methionine biosynthesis via salvage pathway; S-methyl-5-thio-alpha-D-ribose 1-phosphate from S-methyl-5'-thioadenosine (phosphorylase route): step 1/1. Catalyzes the reversible phosphorylation of S-methyl-5'-thioadenosine (MTA) to adenine and 5-methylthioribose-1-phosphate. Involved in the breakdown of MTA, a major by-product of polyamine biosynthesis. Responsible for the first step in the methionine salvage pathway after MTA has been generated from S-adenosylmethionine. Has broad substrate specificity with 6-aminopurine nucleosides as preferred substrates. The sequence is that of S-methyl-5'-thioadenosine phosphorylase from Emericella nidulans (strain FGSC A4 / ATCC 38163 / CBS 112.46 / NRRL 194 / M139) (Aspergillus nidulans).